Consider the following 336-residue polypeptide: F420-dependent glucose-6-phosphate dehydrogenase (336 aa).

D39 provides a ligand contact to coenzyme F420-(gamma-Glu)n. H40 functions as the Proton donor in the catalytic mechanism. Coenzyme F420-(gamma-Glu)n is bound by residues T76 and T107–G108. The active-site Proton acceptor is E109. Residues N112, G177–G178, and E180–V181 contribute to the coenzyme F420-(gamma-Glu)n site. T195, K198, K259, and R283 together coordinate substrate.

It belongs to the F420-dependent glucose-6-phosphate dehydrogenase family. As to quaternary structure, homodimer.

The enzyme catalyses oxidized coenzyme F420-(gamma-L-Glu)(n) + D-glucose 6-phosphate + H(+) = 6-phospho-D-glucono-1,5-lactone + reduced coenzyme F420-(gamma-L-Glu)(n). Its function is as follows. Catalyzes the coenzyme F420-dependent oxidation of glucose 6-phosphate (G6P) to 6-phosphogluconolactone. Appears to have a role in resistance to oxidative stress, via its consumption of G6P that serves as a source of reducing power to combat oxidative stress in mycobacteria. This Mycobacterium leprae (strain Br4923) protein is F420-dependent glucose-6-phosphate dehydrogenase.